Here is a 368-residue protein sequence, read N- to C-terminus: MSAQSVEEDSILIIPTPDEEEKILRVKLEEDPDGEEGSSIPWNHLPDPEIFRQRFRQFGYQDSPGPREAVSQLRELCRLWLRPETHTKEQILELVVLEQFVAILPKELQTWVRDHHPENGEEAVTVLEDLESELDDPGQPVSLRRRKREVLVEDMVSQEEAQGLPSSELDAVENQLKWASWELHSLRHCDDDGRTENGALAPKQELPSAVESHEVPGTLNMGVPQIFKYGETCFPKGRFERKRNPSRKKQHICDECGKHFSQGSALILHQRIHSGEKPYGCVECGKAFSRSSILVQHQRVHTGEKPYKCLECGKAFSQNSGLINHQRIHTGEKPYECVQCGKSYSQSSNLFRHXXRHNAXKLLNVVKV.

A Glycyl lysine isopeptide (Lys-Gly) (interchain with G-Cter in SUMO2) cross-link involves residue lysine 22. A Glycyl lysine isopeptide (Lys-Gly) (interchain with G-Cter in SUMO1); alternate cross-link involves residue lysine 27. A Glycyl lysine isopeptide (Lys-Gly) (interchain with G-Cter in SUMO2); alternate cross-link involves residue lysine 27. Positions 52-134 (RQRFRQFGYQ…TVLEDLESEL (83 aa)) constitute an SCAN box domain. Residues serine 132 and serine 142 each carry the phosphoserine modification. Glycyl lysine isopeptide (Lys-Gly) (interchain with G-Cter in SUMO2) cross-links involve residues lysine 147, lysine 177, and lysine 236. The C2H2-type 1 zinc-finger motif lies at 251 to 273 (HICDECGKHFSQGSALILHQRIH). The segment at 251–301 (HICDECGKHFSQGSALILHQRIHSGEKPYGCVECGKAFSRSSILVQHQRVH) is necessary and sufficient for nuclear localization. Position 274 is a phosphoserine (serine 274). Residues lysine 277 and lysine 286 each participate in a glycyl lysine isopeptide (Lys-Gly) (interchain with G-Cter in SUMO2) cross-link. 3 consecutive C2H2-type zinc fingers follow at residues 279–301 (YGCV…QRVH), 307–329 (YKCL…QRIH), and 335–357 (YECV…XXRH). Serine 292 carries the phosphoserine modification. Tyrosine 335 carries the post-translational modification Phosphotyrosine. Glycyl lysine isopeptide (Lys-Gly) (interchain with G-Cter in SUMO2) cross-links involve residues lysine 361 and lysine 367.

Belongs to the krueppel C2H2-type zinc-finger protein family. Sumoylated.

It localises to the nucleus. Functionally, transcription factor required for myelination of differentiated oligodendrocytes. Required for the conversion of oligodendrocytes from the premyelinating to the myelinating state. In the developing central nervous system (CNS), involved in the maintenance in the progenitor stage by promoting the cell cycle. Specifically binds to the 5'-TCAT-3' DNA sequence. Has transcription repressor activity in vitro. This chain is Zinc finger protein 24 (ZNF24), found in Pan troglodytes (Chimpanzee).